The chain runs to 125 residues: Large ribosomal subunit protein uL30 (125 aa).

The tract at residues 1-61 (MSKLKVKLLR…HLVGVAYRID (61 aa)) is large ribosomal subunit protein uL30. Residues 62-125 (FSGDIPTVER…KNWKGEEVEL (64 aa)) are unknown.

This sequence belongs to the universal ribosomal protein uL30 family. In terms of assembly, part of the 50S ribosomal subunit.

In Aquifex aeolicus (strain VF5), this protein is Large ribosomal subunit protein uL30.